The primary structure comprises 1091 residues: Integrin alpha-6 (1091 aa).

An N-terminal signal peptide occupies residues 1-23 (MAVAGQLCLLYLSAGLLARLGTA). The Extracellular segment spans residues 24–1011 (FNLDTREDNV…FPSKTVAQYS (988 aa)). FG-GAP repeat units follow at residues 30–95 (EDNV…GPCT), 101–166 (NDAD…IEDD), 176–229 (DGRL…FFDM), 244–300 (DHDE…KSAH), 301–363 (LLPE…KWSN), 364–419 (VKPI…GIIT), and 420–479 (KPTQ…VTPN). Asn-78 is a glycosylation site (N-linked (GlcNAc...) asparagine). Intrachain disulfides connect Cys-86-Cys-94, Cys-131-Cys-154, and Cys-175-Cys-188. Asn-223 and Asn-284 each carry an N-linked (GlcNAc...) asparagine glycan. Ca(2+)-binding residues include Asp-324, Asn-326, Asp-328, and Asp-332. A glycan (N-linked (GlcNAc...) asparagine) is linked at Asn-370. Positions 386, 388, 390, 392, 394, 441, 443, 445, 447, and 449 each coordinate Ca(2+). Cystine bridges form between Cys-489-Cys-496, Cys-502-Cys-562, Cys-626-Cys-632, and Cys-726-Cys-737. N-linked (GlcNAc...) asparagine glycans are attached at residues Asn-731, Asn-746, and Asn-927. 2 cysteine pairs are disulfide-bonded: Cys-881-Cys-928 and Cys-934-Cys-939. The N-linked (GlcNAc...) asparagine glycan is linked to Asn-958. The helical transmembrane segment at 1012-1037 (GVAWWIILLAVLAGILMLALLVFLLW) threads the bilayer. Over 1038 to 1091 (KCGFFKRSRYDDSIPRYHAVRIRKEEREIKDEKHMDNLEKKQWITKWNENESYS) the chain is Cytoplasmic. Cys-1039 carries S-palmitoyl cysteine; by DHHC3 lipidation. Positions 1040–1044 (GFFKR) match the GFFKR motif motif. At Arg-1064 the chain carries Phosphoserine.

It belongs to the integrin alpha chain family. Heterodimer of an alpha and a beta subunit. The alpha subunit is composed of a heavy and a light chain linked by a disulfide bond. Alpha-6 associates with either beta-1 (ITGB1) or beta-4 (ITGB4) to form ITGA6:ITGB1 and ITGA6:ITGB4, respectively. ITGA6:ITGB1 is found in a complex with CD9; interaction takes place in oocytes and is involved in sperm-egg fusion. ITGA6:ITGB4 is found in a ternary complex with NRG1 and ERBB3. ITGA6:ITGB4 is found in a ternary complex with IGF1 and IGF1R. ITGA6:ITGB4 interacts with IGF2. Interacts with ADAM9. Interacts with RAB21. Interacts with MDK. ITGA6:ITGB1 interacts with MDK; this interaction mediates MDK-induced neurite outgrowth. Interacts with CD82; this interaction down-regulates ITGA6-mediated cell adhesion. Post-translationally, isoforms containing segment A, but not segment B, are the major targets for PMA-induced phosphorylation. Phosphorylation occurs on 'Ser-1064' of isoform alpha-6X1A. Phosphorylation is not required for the induction of integrin alpha-6A/beta-1 high affinity but may reduce the affinity for ligand. In terms of processing, undergoes PLAU-mediated cleavage at residues Arg-595-596-Arg in a time-dependent manner to produce processed integrin alpha-6 (alpha6p). Palmitoylation by DHHC3 enhances stability and cell surface expression. In terms of tissue distribution, expressed at low levels in normal skin tissue with elevated levels in skin tumors.

It localises to the cell membrane. Its function is as follows. Integrin alpha-6/beta-1 (ITGA6:ITGB1) is a receptor for laminin on platelets. Integrin alpha-6/beta-1 (ITGA6:ITGB1) is present in oocytes and is involved in sperm-egg fusion. Integrin alpha-6/beta-4 (ITGA6:ITGB4) is a receptor for laminin in epithelial cells and it plays a critical structural role in the hemidesmosome. ITGA6:ITGB4 binds to NRG1 (via EGF domain) and this binding is essential for NRG1-ERBB signaling. ITGA6:ITGB4 binds to IGF1 and this binding is essential for IGF1 signaling. ITGA6:ITGB4 binds to IGF2 and this binding is essential for IGF2 signaling. This is Integrin alpha-6 (Itga6) from Mus musculus (Mouse).